A 698-amino-acid chain; its full sequence is DNA ligase (698 aa).

Residues 47-51 (DAQYD), 96-97 (SL), and E128 contribute to the NAD(+) site. The active-site N6-AMP-lysine intermediate is K130. Residues R151, E186, K303, and K327 each contribute to the NAD(+) site. C422, C425, C440, and C446 together coordinate Zn(2+). The region spanning 620–698 (GDNLLLSNQT…EEEWIKMVNE (79 aa)) is the BRCT domain.

This sequence belongs to the NAD-dependent DNA ligase family. LigA subfamily. Mg(2+) serves as cofactor. It depends on Mn(2+) as a cofactor.

The catalysed reaction is NAD(+) + (deoxyribonucleotide)n-3'-hydroxyl + 5'-phospho-(deoxyribonucleotide)m = (deoxyribonucleotide)n+m + AMP + beta-nicotinamide D-nucleotide.. In terms of biological role, DNA ligase that catalyzes the formation of phosphodiester linkages between 5'-phosphoryl and 3'-hydroxyl groups in double-stranded DNA using NAD as a coenzyme and as the energy source for the reaction. It is essential for DNA replication and repair of damaged DNA. The protein is DNA ligase of Orientia tsutsugamushi (strain Boryong) (Rickettsia tsutsugamushi).